A 157-amino-acid polypeptide reads, in one-letter code: Phosphopantetheine adenylyltransferase (157 aa).

Position 10 (threonine 10) interacts with substrate. ATP contacts are provided by residues 10-11 and histidine 18; that span reads TF. Substrate-binding residues include lysine 42, leucine 74, and arginine 88. ATP is bound by residues 89–91, glutamate 99, and 124–130; these read GLR and NAFISSS.

This sequence belongs to the bacterial CoaD family. In terms of assembly, homohexamer. Requires Mg(2+) as cofactor.

It is found in the cytoplasm. It carries out the reaction (R)-4'-phosphopantetheine + ATP + H(+) = 3'-dephospho-CoA + diphosphate. It participates in cofactor biosynthesis; coenzyme A biosynthesis; CoA from (R)-pantothenate: step 4/5. Tightly binds to CoA, which is presumably a feedback inhibitor. Potently inhibited by D-amethopterin, which simultaneously occupies the 4'-phosphopantetheine- and ATP-binding sites; following treatment with D-amethopterin, H.pylori exhibits morphological characteristics associated with cell death, showing that D-amethopterin displays antimicrobial activity. Reversibly transfers an adenylyl group from ATP to 4'-phosphopantetheine, yielding dephospho-CoA (dPCoA) and pyrophosphate. This Helicobacter pylori (strain ATCC 700392 / 26695) (Campylobacter pylori) protein is Phosphopantetheine adenylyltransferase.